A 376-amino-acid polypeptide reads, in one-letter code: Carbamoyl phosphate synthase small chain (376 aa).

Positions 1–187 are CPSase; sequence MRAFLALEDG…AADGAYAWPG (187 aa). Serine 45, glycine 239, and glycine 241 together coordinate L-glutamine. One can recognise a Glutamine amidotransferase type-1 domain in the interval 191–376; it reads RLVVYDYGIK…RGMVREAVGR (186 aa). The active-site Nucleophile is the cysteine 266. L-glutamine-binding residues include leucine 267, glutamine 270, asparagine 308, glycine 310, and phenylalanine 311. Active-site residues include histidine 349 and glutamate 351.

Belongs to the CarA family. As to quaternary structure, composed of two chains; the small (or glutamine) chain promotes the hydrolysis of glutamine to ammonia, which is used by the large (or ammonia) chain to synthesize carbamoyl phosphate. Tetramer of heterodimers (alpha,beta)4.

It catalyses the reaction hydrogencarbonate + L-glutamine + 2 ATP + H2O = carbamoyl phosphate + L-glutamate + 2 ADP + phosphate + 2 H(+). The catalysed reaction is L-glutamine + H2O = L-glutamate + NH4(+). It functions in the pathway amino-acid biosynthesis; L-arginine biosynthesis; carbamoyl phosphate from bicarbonate: step 1/1. Its pathway is pyrimidine metabolism; UMP biosynthesis via de novo pathway; (S)-dihydroorotate from bicarbonate: step 1/3. In terms of biological role, small subunit of the glutamine-dependent carbamoyl phosphate synthetase (CPSase). CPSase catalyzes the formation of carbamoyl phosphate from the ammonia moiety of glutamine, carbonate, and phosphate donated by ATP, constituting the first step of 2 biosynthetic pathways, one leading to arginine and/or urea and the other to pyrimidine nucleotides. The small subunit (glutamine amidotransferase) binds and cleaves glutamine to supply the large subunit with the substrate ammonia. In Nitratidesulfovibrio vulgaris (strain DSM 19637 / Miyazaki F) (Desulfovibrio vulgaris), this protein is Carbamoyl phosphate synthase small chain.